The chain runs to 318 residues: Ribosome biogenesis protein RLP7 (318 aa).

Disordered regions lie at residues 1-49 and 101-121; these read MSQP…NRFV and AGSK…DEED. Positions 19–40 are enriched in basic and acidic residues; the sequence is ADRTRLEKQELAKKRKEQEEKQ. Residues 110–121 are compositionally biased toward acidic residues; that stretch reads ELQDVDEEDEED.

This sequence belongs to the universal ribosomal protein uL30 family.

It is found in the nucleus. Its subcellular location is the nucleolus. Involved in the biogenesis of the 60S ribosomal subunit. May act as a specificity factor that binds precursor rRNAs and tethers the enzymes that carry out the early 5' to 3' exonucleolytic reactions that generate the mature rRNAs. This is Ribosome biogenesis protein RLP7 (RLP7) from Kluyveromyces lactis (strain ATCC 8585 / CBS 2359 / DSM 70799 / NBRC 1267 / NRRL Y-1140 / WM37) (Yeast).